Here is a 421-residue protein sequence, read N- to C-terminus: Tyrosine--tRNA ligase (421 aa).

L-tyrosine is bound at residue Tyr-36. The 'HIGH' region motif lies at 41–50; sequence PTADSLHIGH. Positions 170 and 174 each coordinate L-tyrosine. A 'KMSKS' region motif is present at residues 231–235; the sequence is KFGKS. Lys-234 is an ATP binding site. The 68-residue stretch at 353–420 folds into the S4 RNA-binding domain; the sequence is TNIVEALIET…KKKYFMVNYQ (68 aa).

It belongs to the class-I aminoacyl-tRNA synthetase family. TyrS type 1 subfamily. As to quaternary structure, homodimer.

It is found in the cytoplasm. It carries out the reaction tRNA(Tyr) + L-tyrosine + ATP = L-tyrosyl-tRNA(Tyr) + AMP + diphosphate + H(+). Its function is as follows. Catalyzes the attachment of tyrosine to tRNA(Tyr) in a two-step reaction: tyrosine is first activated by ATP to form Tyr-AMP and then transferred to the acceptor end of tRNA(Tyr). This is Tyrosine--tRNA ligase from Staphylococcus epidermidis (strain ATCC 35984 / DSM 28319 / BCRC 17069 / CCUG 31568 / BM 3577 / RP62A).